The sequence spans 327 residues: Fumigatonoid B endoperoxide isomerase nvfE (327 aa).

Residues 1 to 22 are disordered; sequence MGRDQVSHKRSQNSNVSEIPDL. Residues H152, D154, and H234 each contribute to the Fe cation site.

Belongs to the PhyH family. Homodimer. It depends on Fe cation as a cofactor.

It catalyses the reaction fumigatonoid B = fumigatonoid C. The protein operates within secondary metabolite biosynthesis; terpenoid biosynthesis. Fumigatonoid B endoperoxide isomerase; part of the gene cluster that mediates the biosynthesis of novofumigatonin, a heavily oxygenated meroterpenoid containing a unique orthoester moiety. The first step of the pathway is the synthesis of 3,5-dimethylorsellinic acid (DMOA) by the polyketide synthase nvfA via condensation of one acetyl-CoA starter unit with 3 malonyl-CoA units and 2 methylations. DMOA is then converted to farnesyl-DMOA by the farnesyltransferase nvfB. Epoxydation by FAD-dependent monooxygenase nvfK, followed by a protonation-initiated cyclization catalyzed by the terpene cyclase nvfL leads to the production of asnavolin H. The short chain dehydrogenase nvfC then as a 3-OH dehydrogenase of asnovolin H to yield chemesin D. There are two branches to synthesize asnovolin A from chemesin D. In one branch, chemesin D undergoes Baeyer-Villiger oxidation by nvfH, methylation by nvfJ, and enoyl reduction by the nvfM D enoylreductase that reduces the double bond between C-5'and C-6', to form respectively asnovolin I, asnovolin K, and asnovolin A. In the other branch, the methylation precedes the Baeyer-Villiger oxidation and the enoyl reduction to yield asnovolin A via the asnovolin J intermediate. Asnovolin A is further converted to fumigatonoid A by the Fe(II)/2-oxoglutarate-dependent dioxygenase nvfI that catalyzes an endoperoxidation reaction. The alpha/beta hydrolase nvfD then acts as an epimerase that converts fumigatonoid A to its C-5' epimer, which then undergoes spontaneous or nvfD-catalyzed lactonization. The following step utilizes the ketoreductase nvfG to produce fumigatonoid B. The dioxygenase nvfE further converts fumigatonoid B into fumigatonoid C. Finally the Fe(II)/2-oxoglutarate-dependent dioxygenase nvfF catalyzes two rounds of oxidation to transform fumigatonoid C into the end product, novofumigatonin A. The chain is Fumigatonoid B endoperoxide isomerase nvfE from Aspergillus novofumigatus (strain IBT 16806).